The chain runs to 1119 residues: Transcriptional repressor NF-X1 homolog (1119 aa).

The disordered stretch occupies residues 1 to 214; that stretch reads MADTEGTSSS…EPLTEEETKI (214 aa). Residues 7 to 17 are compositionally biased toward low complexity; the sequence is TSSSIPTSTNS. Positions 18 to 29 are enriched in basic residues; sequence SRHRASRGRGGR. Residues 84-98 are compositionally biased toward low complexity; sequence ANFTFNPNAATFNPA. Positions 113–128 are enriched in polar residues; sequence GASTHSNQNSRQQEPS. Positions 143–154 are enriched in basic and acidic residues; sequence RQLEIQEQRGDS. The span at 157 to 167 shows a compositional bias: low complexity; it reads QNQSRQNNRNQ. Over residues 174-193 the composition is skewed to polar residues; the sequence is ANQQNKSVQNPSRNPGNSRR. Basic and acidic residues predominate over residues 198–214; it reads RRREQKEEPLTEEETKI. An RING-type; degenerate zinc finger spans residues 235-287; it reads CAICYTRITTRQGVWSCKTCYHIFHISTGCITDWARSSRDKEGANTWRCPTCQ. NF-X1-type zinc fingers lie at residues 330–348, 383–402, 439–458, 500–523, 565–584, 592–611, 649–668, 703–726, and 735–756; these read CPHPCTELCHPGPCIECKL, CGQHNCERICHSGDCGECTV, CGIHHCTKKCHDKECGECET, CGTPGKNHHCREKCHEGPCPPCNL, CGMHKCQEVCCIQDEHFCLQ, CGIHTCENVCHAGQCRPCLQ, CDHSVSHKCHGEQNCPPCTQ, CGVHVCQRTCHGEECEKEGEKCTK, and CEHPCALPCHEDSPCEPSPCKA. An R3H domain is found at 867–937; that stretch reads IDFVKSVEKI…KRSIVLTAVR (71 aa). Disordered stretches follow at residues 1024-1047 and 1078-1119; these read VDSDDEESNVPTTSNLVSSPPKDW and AAKK…ELLE. Polar residues predominate over residues 1032–1041; that stretch reads NVPTTSNLVS. A compositionally biased stretch (acidic residues) spans 1086 to 1097; sequence PTWEDQCDEDAP.

It belongs to the NFX1 family.

It is found in the nucleus. Functionally, may play a role in transcription regulation. The protein is Transcriptional repressor NF-X1 homolog (nfx-1) of Caenorhabditis elegans.